The chain runs to 503 residues: Cysteine--tRNA ligase (503 aa).

C31 contacts Zn(2+). The short motif at P33–N43 is the 'HIGH' region element. The Zn(2+) site is built by C225, H264, and E268. The 'KMSKS' region motif lies at K297–S301. K300 serves as a coordination point for ATP.

It belongs to the class-I aminoacyl-tRNA synthetase family. Monomer. Zn(2+) serves as cofactor.

It is found in the cytoplasm. It carries out the reaction tRNA(Cys) + L-cysteine + ATP = L-cysteinyl-tRNA(Cys) + AMP + diphosphate. This Bartonella tribocorum (strain CIP 105476 / IBS 506) protein is Cysteine--tRNA ligase.